Reading from the N-terminus, the 189-residue chain is MVKVIASSVRKGNVLDVDGKLYVVLTAQNFHPGKGTPVTQVDMRRIVDGVKVSERWRTTEQVERAFVEDVSFQFLYEDGEGFHFMNPSSYDQVVVDVDTMGDDKAYLQEGMSCILSMHEGIALALQLPRHVTLEIMETEPVVKGQTASSSYKPAILSNGVRAMVPPHINAGTRVVIATEDNSYVERAKD.

This sequence belongs to the elongation factor P family.

Its subcellular location is the cytoplasm. It participates in protein biosynthesis; polypeptide chain elongation. Functionally, involved in peptide bond synthesis. Stimulates efficient translation and peptide-bond synthesis on native or reconstituted 70S ribosomes in vitro. Probably functions indirectly by altering the affinity of the ribosome for aminoacyl-tRNA, thus increasing their reactivity as acceptors for peptidyl transferase. The chain is Elongation factor P from Rhizobium johnstonii (strain DSM 114642 / LMG 32736 / 3841) (Rhizobium leguminosarum bv. viciae).